A 264-amino-acid polypeptide reads, in one-letter code: ATP synthase subunit a (264 aa).

The next 6 membrane-spanning stretches (helical) occupy residues 29–49 (TWHIDSLFFSVGLGVLFLWIF), 90–110 (IAPLALTIFVWVFMMNFMDMI), 134–154 (DVNITFSLAIGVFLLIIFYSI), 177–197 (IPVNLLLETVTLIAKPISLAL), 208–228 (LIFILIALMYGTNLLLSTLGV), and 235–255 (LIFHILVITLQAFIFMMLTIV).

It belongs to the ATPase A chain family. As to quaternary structure, F-type ATPases have 2 components, CF(1) - the catalytic core - and CF(0) - the membrane proton channel. CF(1) has five subunits: alpha(3), beta(3), gamma(1), delta(1), epsilon(1). CF(0) has three main subunits: a(1), b(2) and c(9-12). The alpha and beta chains form an alternating ring which encloses part of the gamma chain. CF(1) is attached to CF(0) by a central stalk formed by the gamma and epsilon chains, while a peripheral stalk is formed by the delta and b chains.

It is found in the cell inner membrane. Key component of the proton channel; it plays a direct role in the translocation of protons across the membrane. This Shewanella baltica (strain OS223) protein is ATP synthase subunit a.